Reading from the N-terminus, the 254-residue chain is DNA repair protein RecO (254 aa).

This sequence belongs to the RecO family.

Functionally, involved in DNA repair and RecF pathway recombination. This is DNA repair protein RecO from Verminephrobacter eiseniae (strain EF01-2).